Consider the following 309-residue polypeptide: Ribonuclease Z (309 aa).

7 residues coordinate Zn(2+): His-63, His-65, Asp-67, His-68, His-145, Asp-216, and His-274. Residue Asp-67 is the Proton acceptor of the active site.

The protein belongs to the RNase Z family. In terms of assembly, homodimer. Zn(2+) serves as cofactor.

The enzyme catalyses Endonucleolytic cleavage of RNA, removing extra 3' nucleotides from tRNA precursor, generating 3' termini of tRNAs. A 3'-hydroxy group is left at the tRNA terminus and a 5'-phosphoryl group is left at the trailer molecule.. Its function is as follows. Zinc phosphodiesterase, which displays some tRNA 3'-processing endonuclease activity. Probably involved in tRNA maturation, by removing a 3'-trailer from precursor tRNA. The polypeptide is Ribonuclease Z (Streptococcus agalactiae serotype Ia (strain ATCC 27591 / A909 / CDC SS700)).